A 459-amino-acid chain; its full sequence is Argininosuccinate lyase (459 aa).

It belongs to the lyase 1 family. Argininosuccinate lyase subfamily.

The protein localises to the cytoplasm. The catalysed reaction is 2-(N(omega)-L-arginino)succinate = fumarate + L-arginine. The protein operates within amino-acid biosynthesis; L-arginine biosynthesis; L-arginine from L-ornithine and carbamoyl phosphate: step 3/3. This is Argininosuccinate lyase from Prochlorococcus marinus subsp. pastoris (strain CCMP1986 / NIES-2087 / MED4).